A 742-amino-acid chain; its full sequence is Zinc finger protein 280C (742 aa).

Glycyl lysine isopeptide (Lys-Gly) (interchain with G-Cter in SUMO2) cross-links involve residues Lys-10, Lys-23, Lys-42, Lys-65, Lys-85, Lys-123, and Lys-135. A compositionally biased stretch (polar residues) spans Phe-138 to Gln-168. The tract at residues Phe-138 to Arg-243 is disordered. Glycyl lysine isopeptide (Lys-Gly) (interchain with G-Cter in SUMO2) cross-links involve residues Lys-180, Lys-186, and Lys-193. Polar residues predominate over residues Pro-182–Asn-191. A compositionally biased stretch (low complexity) spans Ser-200 to Gln-222. A compositionally biased stretch (polar residues) spans Thr-223 to Arg-243. 5 C2H2-type zinc fingers span residues Phe-323 to His-345, Thr-360 to His-383, Thr-390 to His-413, Tyr-420 to His-443, and Tyr-477 to His-499. Residues Leu-523–Thr-578 show a composition bias toward low complexity. Positions Leu-523 to Lys-608 are disordered. The segment covering Gly-579–Lys-592 has biased composition (polar residues). A Glycyl lysine isopeptide (Lys-Gly) (interchain with G-Cter in SUMO2) cross-link involves residue Lys-580. Over residues Ser-593–Lys-608 the composition is skewed to basic residues.

Its subcellular location is the nucleus. May function as a transcription factor. In Mus musculus (Mouse), this protein is Zinc finger protein 280C (Znf280c).